A 560-amino-acid chain; its full sequence is Protein tweety homolog 3 (560 aa).

The Extracellular portion of the chain corresponds to 1 to 43 (MAAVVNYSPPWWVNLFHRLPHFNLQFQQTSSDFRPDDSDYQKA). A helical membrane pass occupies residues 44–64 (VLLLGAAALVCLALDLLFLLF). Topologically, residues 65 to 87 (YSFWLCCCRRKNHDSPNADCCCT) are cytoplasmic. The chain crosses the membrane as a helical span at residues 88 to 108 (AWCVIIATLVCSAGIAVGFYG). The Extracellular segment spans residues 109 to 212 (NGETCDGVTR…TEQYDWYRWL (104 aa)). 2 residues coordinate Ca(2+): glutamate 111 and aspartate 114. Asparagine 127 and asparagine 145 each carry an N-linked (GlcNAc...) asparagine glycan. Residues 213–233 (GYLGLLLFDVIICLLVLVGLI) form a helical membrane-spanning segment. Topologically, residues 234–238 (RNSRS) are cytoplasmic. A helical transmembrane segment spans residues 239–259 (ILIGVCFLGVLTLVISWASLG). Topologically, residues 260–387 (LEFSFAVGAS…LTGLCYDGVE (128 aa)) are extracellular. 2 disulfide bridges follow: cysteine 272/cysteine 382 and cysteine 300/cysteine 367. Asparagine 352 carries an N-linked (GlcNAc...) asparagine glycan. A helical membrane pass occupies residues 388–408 (GLIYLVLFSFVTALMFSSIVC). Over 409-560 (SVPHTWQSKR…AIHRPHSAIH (152 aa)) the chain is Cytoplasmic. Disordered regions lie at residues 415–435 (QSKRSEEEDGDETSATLGSRA) and 486–560 (TPRC…SAIH). Polar residues predominate over residues 539 to 549 (TSRSAPNSRPN).

It belongs to the tweety family. As to quaternary structure, homotetramer; disulfide-linked. Forms cis-homodimers in the presence of Ca(2+).

Its subcellular location is the cell membrane. It carries out the reaction chloride(in) = chloride(out). The enzyme catalyses L-glutamate(out) = L-glutamate(in). May act as a calcium-independent, swelling-dependent volume-regulated anion channel (VRAC-swell) which plays a pivotal role in the process of regulatory volume decrease (RVD) in the brain through the efflux of anions like chloride and organic osmolytes like glutamate. Probable large-conductance Ca(2+)-activated chloride channel. The sequence is that of Protein tweety homolog 3 (ttyh3b) from Danio rerio (Zebrafish).